A 638-amino-acid chain; its full sequence is Methyl-accepting chemotaxis protein McpQ (638 aa).

A helical transmembrane segment spans residues L18–H38. One can recognise an HBM domain in the interval D45–A282. Residues T287–I307 traverse the membrane as a helical segment. One can recognise an HAMP domain in the interval R309–G361. The 237-residue stretch at G366–R602 folds into the Methyl-accepting transducer domain.

Belongs to the methyl-accepting chemotaxis (MCP) protein family.

It localises to the cell membrane. Chemotactic-signal transducers respond to changes in the concentration of attractants and repellents in the environment, transduce a signal from the outside to the inside of the cell, and facilitate sensory adaptation through the variation of the level of methylation. McpQ recognizes specifically citrate and citrate/metal(2+) complexes. Binds citrate/metal(2+) complexes with higher affinity than free citrate, and mediates preferentially chemotaxis toward citrate/metal(2+) complexes. The sequence is that of Methyl-accepting chemotaxis protein McpQ from Pseudomonas putida (strain ATCC 47054 / DSM 6125 / CFBP 8728 / NCIMB 11950 / KT2440).